Consider the following 914-residue polypeptide: Eukaryotic translation initiation factor 3 subunit C-like protein (914 aa).

The segment at 1–44 is disordered; it reads MSRFFTTGSDSESESSLSGEELVTKPVGGNYGKQPLLLSEDEED. A compositionally biased stretch (low complexity) spans 8 to 21; that stretch reads GSDSESESSLSGEE. Residues S9, S11, S13, S15, S16, S18, and S39 each carry the phosphoserine modification. K99 carries the N6-acetyllysine modification. Disordered regions lie at residues 157-302 and 523-543; these read TSYK…GGEW and QLTP…NEGE. S166, S178, S181, and S182 each carry phosphoserine. The span at 166–190 shows a compositional bias: acidic residues; the sequence is SADEDAEKNEEDSEGSSDEDEDEDG. Residues 199–216 show a composition bias toward basic and acidic residues; that stretch reads KKSEAPSGESRKFLKKMD. The segment covering 217 to 232 has biased composition (acidic residues); that stretch reads DEDEDSEDSEDDEDWD. The span at 261 to 278 shows a compositional bias: basic and acidic residues; that stretch reads PTTDEDKKAAEKKREDKA. The segment covering 291–300 has biased composition (acidic residues); it reads EEEEEDNEGG. Positions 523-532 are enriched in polar residues; sequence QLTPPEGSSK. T525 is modified (phosphothreonine). K644 is modified (N6-acetyllysine). The PCI domain maps to 674-850; that stretch reads FHLHINLELL…QTVVMHRTEP (177 aa). The tract at residues 886–914 is disordered; sequence FRDQKDGYRKNEGYMRRGGYRQQQSQTAY. The segment covering 887–900 has biased composition (basic and acidic residues); it reads RDQKDGYRKNEGYM. S910 carries the post-translational modification Phosphoserine.

The protein belongs to the eIF-3 subunit C family. As to quaternary structure, component of the eukaryotic translation initiation factor 3 (eIF-3) complex, which is composed of 13 subunits: EIF3A, EIF3B, EIF3C, EIF3D, EIF3E, EIF3F, EIF3G, EIF3H, EIF3I, EIF3J, EIF3K, EIF3L and EIF3M. The eIF-3 complex appears to include 3 stable modules: module A is composed of EIF3A, EIF3B, EIF3G and EIF3I; module B is composed of EIF3F, EIF3H, and EIF3M; and module C is composed of EIF3C, EIF3D, EIF3E, EIF3K and EIF3L. EIF3C of module C binds EIF3B of module A and EIF3H of module B, thereby linking the three modules. EIF3J is a labile subunit that binds to the eIF-3 complex via EIF3B. The eIF-3 complex interacts with RPS6KB1 under conditions of nutrient depletion. Mitogenic stimulation leads to binding and activation of a complex composed of MTOR and RPTOR, leading to phosphorylation and release of RPS6KB1 and binding of EIF4B to eIF-3. Phosphorylated. Phosphorylation is enhanced upon serum stimulation.

It localises to the cytoplasm. In terms of biological role, component of the eukaryotic translation initiation factor 3 (eIF-3) complex, which is required for several steps in the initiation of protein synthesis. The eIF-3 complex associates with the 40S ribosome and facilitates the recruitment of eIF-1, eIF-1A, eIF-2:GTP:methionyl-tRNAi and eIF-5 to form the 43S pre-initiation complex (43S PIC). The eIF-3 complex stimulates mRNA recruitment to the 43S PIC and scanning of the mRNA for AUG recognition. The eIF-3 complex is also required for disassembly and recycling of post-termination ribosomal complexes and subsequently prevents premature joining of the 40S and 60S ribosomal subunits prior to initiation. The eIF-3 complex specifically targets and initiates translation of a subset of mRNAs involved in cell proliferation, including cell cycling, differentiation and apoptosis, and uses different modes of RNA stem-loop binding to exert either translational activation or repression. The sequence is that of Eukaryotic translation initiation factor 3 subunit C-like protein (EIF3CL) from Homo sapiens (Human).